The following is a 378-amino-acid chain: Putative zinc finger protein 302L (378 aa).

Residues 3–25 form a C2H2-type; degenerate zinc finger; the sequence is IVCEFCDKSFDSKSKVNAHQRTK.

It belongs to the IIV-6 302L family.

In Invertebrate iridescent virus 6 (IIV-6), this protein is Putative zinc finger protein 302L.